The following is a 334-amino-acid chain: L-lactate dehydrogenase B chain (334 aa).

G30–K58 contributes to the NAD(+) binding site. Substrate-binding residues include R107, N139, and R170. Residue N139 coordinates NAD(+). H194 functions as the Proton acceptor in the catalytic mechanism. T249 provides a ligand contact to substrate.

The protein belongs to the LDH/MDH superfamily. LDH family. Homotetramer.

The protein localises to the cytoplasm. It carries out the reaction (S)-lactate + NAD(+) = pyruvate + NADH + H(+). It functions in the pathway fermentation; pyruvate fermentation to lactate; (S)-lactate from pyruvate: step 1/1. In terms of biological role, interconverts simultaneously and stereospecifically pyruvate and lactate with concomitant interconversion of NADH and NAD(+). The protein is L-lactate dehydrogenase B chain (ldhb) of Xenopus laevis (African clawed frog).